Here is a 122-residue protein sequence, read N- to C-terminus: MIQMQTQLEVADNTGARRVMCIKVLGGSKRRYATVGDIIKVSIKDAAPRGRVKKGDVYNAVVVRTAKGVRRPDGSLIKFDGNAAVLLNNKLEPIGTRIFGPVTRELRTERFMKIVSLAPEVL.

The protein belongs to the universal ribosomal protein uL14 family. As to quaternary structure, part of the 50S ribosomal subunit. Forms a cluster with proteins L3 and L19. In the 70S ribosome, L14 and L19 interact and together make contacts with the 16S rRNA in bridges B5 and B8.

Functionally, binds to 23S rRNA. Forms part of two intersubunit bridges in the 70S ribosome. This Laribacter hongkongensis (strain HLHK9) protein is Large ribosomal subunit protein uL14.